The primary structure comprises 364 residues: tRNA N6-adenosine threonylcarbamoyltransferase (364 aa).

Residues His115 and His119 each coordinate Fe cation. Substrate contacts are provided by residues 137-141 (LVSGG), Asp170, Gly183, and Asn288. Position 316 (Asp316) interacts with Fe cation.

This sequence belongs to the KAE1 / TsaD family. Fe(2+) is required as a cofactor.

Its subcellular location is the cytoplasm. The enzyme catalyses L-threonylcarbamoyladenylate + adenosine(37) in tRNA = N(6)-L-threonylcarbamoyladenosine(37) in tRNA + AMP + H(+). Required for the formation of a threonylcarbamoyl group on adenosine at position 37 (t(6)A37) in tRNAs that read codons beginning with adenine. Is involved in the transfer of the threonylcarbamoyl moiety of threonylcarbamoyl-AMP (TC-AMP) to the N6 group of A37, together with TsaE and TsaB. TsaD likely plays a direct catalytic role in this reaction. The sequence is that of tRNA N6-adenosine threonylcarbamoyltransferase from Bartonella bacilliformis (strain ATCC 35685 / KC583 / Herrer 020/F12,63).